The chain runs to 273 residues: Formamidopyrimidine-DNA glycosylase (273 aa).

Pro-2 (schiff-base intermediate with DNA) is an active-site residue. The active-site Proton donor is Glu-3. Lys-58 functions as the Proton donor; for beta-elimination activity in the catalytic mechanism. Residues His-91, Arg-109, and Arg-154 each contribute to the DNA site. An FPG-type zinc finger spans residues 239–273 (FVYARTGEPCRICNAPVRQIVQGQRSTFYCPNCQK). The Proton donor; for delta-elimination activity role is filled by Arg-263.

It belongs to the FPG family. Monomer. Zn(2+) is required as a cofactor.

It carries out the reaction Hydrolysis of DNA containing ring-opened 7-methylguanine residues, releasing 2,6-diamino-4-hydroxy-5-(N-methyl)formamidopyrimidine.. It catalyses the reaction 2'-deoxyribonucleotide-(2'-deoxyribose 5'-phosphate)-2'-deoxyribonucleotide-DNA = a 3'-end 2'-deoxyribonucleotide-(2,3-dehydro-2,3-deoxyribose 5'-phosphate)-DNA + a 5'-end 5'-phospho-2'-deoxyribonucleoside-DNA + H(+). Involved in base excision repair of DNA damaged by oxidation or by mutagenic agents. Acts as a DNA glycosylase that recognizes and removes damaged bases. Has a preference for oxidized purines, such as 7,8-dihydro-8-oxoguanine (8-oxoG). Has AP (apurinic/apyrimidinic) lyase activity and introduces nicks in the DNA strand. Cleaves the DNA backbone by beta-delta elimination to generate a single-strand break at the site of the removed base with both 3'- and 5'-phosphates. The protein is Formamidopyrimidine-DNA glycosylase of Herminiimonas arsenicoxydans.